Here is a 562-residue protein sequence, read N- to C-terminus: SPI-1 type 3 secretion system secretin (562 aa).

A signal peptide spans Met-1–Ser-24.

This sequence belongs to the bacterial secretin family. T3SS SctC subfamily. The core secretion machinery of the T3SS is composed of approximately 20 different proteins, including cytoplasmic components, a base, an export apparatus and a needle. This subunit is part of the base, which anchors the injectisome in the bacterial cell envelope. Forms a stable homooligomeric complex. The complex is composed of 15 subunits.

The protein localises to the cell outer membrane. Component of the type III secretion system (T3SS), also called injectisome, which is used to inject bacterial effector proteins into eukaryotic host cells. Forms a ring-shaped multimeric structure with an apparent central pore in the outer membrane. The polypeptide is SPI-1 type 3 secretion system secretin (Salmonella typhimurium (strain LT2 / SGSC1412 / ATCC 700720)).